A 476-amino-acid polypeptide reads, in one-letter code: Siroheme synthase 1 (476 aa).

The precorrin-2 dehydrogenase /sirohydrochlorin ferrochelatase stretch occupies residues 1-203; sequence MDYLPIFADL…GQTAEAQRQL (203 aa). NAD(+) is bound by residues 22–23 and 43–44; these read EV and QS. Ser128 carries the phosphoserine modification. A uroporphyrinogen-III C-methyltransferase region spans residues 219–476; the sequence is GEIALVGAGP…VSRPAVVNLA (258 aa). Pro228 is a binding site for S-adenosyl-L-methionine. Catalysis depends on Asp251, which acts as the Proton acceptor. Lys273 (proton donor) is an active-site residue. Residues 304–306, Ile309, 334–335, Met386, and Gly415 contribute to the S-adenosyl-L-methionine site; these read GGD and TA.

The protein in the N-terminal section; belongs to the precorrin-2 dehydrogenase / sirohydrochlorin ferrochelatase family. This sequence in the C-terminal section; belongs to the precorrin methyltransferase family.

The catalysed reaction is uroporphyrinogen III + 2 S-adenosyl-L-methionine = precorrin-2 + 2 S-adenosyl-L-homocysteine + H(+). It catalyses the reaction precorrin-2 + NAD(+) = sirohydrochlorin + NADH + 2 H(+). It carries out the reaction siroheme + 2 H(+) = sirohydrochlorin + Fe(2+). Its pathway is cofactor biosynthesis; adenosylcobalamin biosynthesis; precorrin-2 from uroporphyrinogen III: step 1/1. It participates in cofactor biosynthesis; adenosylcobalamin biosynthesis; sirohydrochlorin from precorrin-2: step 1/1. The protein operates within porphyrin-containing compound metabolism; siroheme biosynthesis; precorrin-2 from uroporphyrinogen III: step 1/1. It functions in the pathway porphyrin-containing compound metabolism; siroheme biosynthesis; siroheme from sirohydrochlorin: step 1/1. Its pathway is porphyrin-containing compound metabolism; siroheme biosynthesis; sirohydrochlorin from precorrin-2: step 1/1. Its function is as follows. Multifunctional enzyme that catalyzes the SAM-dependent methylations of uroporphyrinogen III at position C-2 and C-7 to form precorrin-2 via precorrin-1. Then it catalyzes the NAD-dependent ring dehydrogenation of precorrin-2 to yield sirohydrochlorin. Finally, it catalyzes the ferrochelation of sirohydrochlorin to yield siroheme. This is Siroheme synthase 1 from Serratia proteamaculans (strain 568).